Consider the following 581-residue polypeptide: MKELIQSLLEQTLESLKAQGIVPADFEARIQVDRTKDKSHGDLATNLAMMLTKVAGKPPREMAQLIIDNLPASAQVAKVEIAGPGFINFFIDDNALANQLKAALGDAMLGVKAAAPQTVVVDYSSPNLAKEMHVGHLRSTIIGDSVVRALEFLGHKVIRQNHVGDWGTQFGMLLAYMEELRAQGDDKANLELSDLESFYRAAKLRFDESDEFATRARQLVVELQSGDAYCNKLWREFNDISLSHCHDVYARLGVSLTRKDVHGESAYNADLAQVVADLDAKGLLAISDGAKVVFQEEFRNKDGEPLPVIIQKADGGFLYATTDLAAMRYRSGVLNADRVLYFVDLRQALHFQQVFSLARTAGFVRDNMTLEHMGFGTMNGEDGRPFKTRSGGVVKLVDLLDEAVERAEQLVRSKNPDMDETEVKEIARVVGIASVKYADLSKNRSSDYIFSFEQMLSFEGNTAPYLLYAYTRVAGIFKKAENIDLTNAELVLDHDKEKELGNKLAQFGEILARMVDKGQPHILCGYLYELAGAFSSFYEACPVLSADSETARDSRLLLSRLTADTLKQGLSLLGIETLERM.

Positions 126–136 (PNLAKEMHVGH) match the 'HIGH' region motif.

This sequence belongs to the class-I aminoacyl-tRNA synthetase family. As to quaternary structure, monomer.

It localises to the cytoplasm. It catalyses the reaction tRNA(Arg) + L-arginine + ATP = L-arginyl-tRNA(Arg) + AMP + diphosphate. This chain is Arginine--tRNA ligase, found in Shewanella amazonensis (strain ATCC BAA-1098 / SB2B).